The following is a 436-amino-acid chain: UPF0597 protein YhaM (436 aa).

It belongs to the UPF0597 family.

The protein is UPF0597 protein YhaM of Escherichia coli O127:H6 (strain E2348/69 / EPEC).